The sequence spans 623 residues: MGTVNKPVVGVLMGFGIITGTLRITNPVRASVLRYDDFHIDEDKLDTNSVYEPYYHSDHAESSWVNRGESSRKAYDHNSPYIWPRNDYDGFLENAHEHHGVYNQGRGIDSGERLMQPTQMSAQEDLGDDTGIHVIPTLNGDDRHKIVNVDQRQYGDVFKGDLNPKPQGQRLIEVSVEENHPFTLRAPIQRIYGVRYTETWSFLPSLTCTGDAAPAIQHICLKHTTCFQDVVVDVDCAENTKEDQLAEISYRFQGKKEADQPWIVVNTSTLFDELELDPPEIEPGVLKVLRTEKQYLGVYIWNMRGSDGTSTYATFLVTWKGDEKTRNPTPAVTPQPRGAEFHMWNYHSHVFSVGDTFSLAMHLQYKIHEAPFDLLLEWLYVPIDPTCQPMRLYSTCLYHPNAPQCLSHMNSGCTFTSPHLAQRVASTVYQNCEHADNYTAYCLGISHMEPSFGLILHDGGTTLKFVDTPESLSGLYVFVVYFNGHVEAVAYTVVSTVDHFVNAIEERGFPPTAGQPPATTKPKEITPVNPGTSPLLRYAAWTGGLAAVVLLCLVIFLICTAKRMRVKAYRVDKSPYNQSMYYAGLPVDDFEDSESTDTEEEFGNAIGGSHGGSSYTVYIDKTR.

An N-terminal signal peptide occupies residues 1–30 (MGTVNKPVVGVLMGFGIITGTLRITNPVRA). Topologically, residues 31–538 (SVLRYDDFHI…NPGTSPLLRY (508 aa)) are virion surface. Residues 208–236 (CTGDAAPAIQHICLKHTTCFQDVVVDVDC) form an interaction with gI region. Asn266 carries N-linked (GlcNAc...) asparagine; by host glycosylation. Residues 352-499 (SVGDTFSLAM…AYTVVSTVDH (148 aa)) are fc-binding. Cystine bridges form between Cys387–Cys413, Cys396–Cys405, and Cys432–Cys442. An N-linked (GlcNAc...) asparagine; by host glycan is attached at Asn437. Residues Tyr438 and Tyr441 each carry the sulfotyrosine; by host modification. The chain crosses the membrane as a helical span at residues 539–559 (AAWTGGLAAVVLLCLVIFLIC). The Intravirion segment spans residues 560–623 (TAKRMRVKAY…SYTVYIDKTR (64 aa)). An Internalization motif motif is present at residues 582–585 (YAGL). The acidic stretch occupies residues 588–601 (DDFEDSESTDTEEE). Residues Ser593 and Ser595 each carry the phosphoserine modification. A phosphothreonine mark is found at Thr596 and Thr598.

It belongs to the alphaherpesvirinae glycoprotein E family. Interacts (via N-terminus) with host receptor IDE (via N-terminus). Interacts with gI; this interaction enhances the Fc receptor function of gE. The heterodimer gE/gI interacts with the Fc part of host IgG. In terms of processing, phosphorylated on serines within the acidic cluster. Phosphorylation determines whether endocytosed viral gE traffics to the trans-Golgi network or recycles to the cell membrane.

Its subcellular location is the virion membrane. The protein localises to the host cell membrane. It is found in the host cell junction. It localises to the host Golgi apparatus membrane. The protein resides in the host endosome membrane. Functionally, envelope glycoprotein that binds to the potential host cell entry receptor IDE. In epithelial cells, the heterodimer gE/gI is required for the cell-to-cell spread of the virus, by sorting nascent virions to cell junctions. Once the virus reaches the cell junctions, virus particles can spread to adjacent cells extremely rapidly through interactions with cellular receptors that accumulate at these junctions. Implicated in basolateral spread in polarized cells. In neuronal cells, gE/gI is essential for the anterograde spread of the infection throughout the host nervous system. Together with US9, the heterodimer gE/gI is involved in the sorting and transport of viral structural components toward axon tips. Its function is as follows. The heterodimer gE/gI serves as a receptor for the Fc part of host IgG. Dissociation of gE/gI from IgG occurs at acidic pH. May thus be involved in anti-VZV antibodies bipolar bridging, followed by intracellular endocytosis and degradation, thereby interfering with host IgG-mediated immune responses. The polypeptide is Envelope glycoprotein E (gE) (Homo sapiens (Human)).